A 1217-amino-acid polypeptide reads, in one-letter code: DNA-directed RNA polymerase subunit beta' (1217 aa).

Residues Cys-60, Cys-62, Cys-75, and Cys-78 each coordinate Zn(2+). Residues Asp-449, Asp-451, and Asp-453 each contribute to the Mg(2+) site. Zn(2+) is bound by residues Cys-821, Cys-895, Cys-902, and Cys-905.

The protein belongs to the RNA polymerase beta' chain family. In terms of assembly, the RNAP catalytic core consists of 2 alpha, 1 beta, 1 beta' and 1 omega subunit. When a sigma factor is associated with the core the holoenzyme is formed, which can initiate transcription. Requires Mg(2+) as cofactor. The cofactor is Zn(2+).

It carries out the reaction RNA(n) + a ribonucleoside 5'-triphosphate = RNA(n+1) + diphosphate. Its function is as follows. DNA-dependent RNA polymerase catalyzes the transcription of DNA into RNA using the four ribonucleoside triphosphates as substrates. The polypeptide is DNA-directed RNA polymerase subunit beta' (Lactobacillus helveticus (strain DPC 4571)).